Consider the following 211-residue polypeptide: Large ribosomal subunit protein bL25 (211 aa).

The segment at 175-211 is disordered; it reads VSEPVEQDLGEESETEEEGAEGEKPAESTGEEPGDDE. Residues 179–194 are compositionally biased toward acidic residues; that stretch reads VEQDLGEESETEEEGA.

Belongs to the bacterial ribosomal protein bL25 family. CTC subfamily. Part of the 50S ribosomal subunit; part of the 5S rRNA/L5/L18/L25 subcomplex. Contacts the 5S rRNA. Binds to the 5S rRNA independently of L5 and L18.

This is one of the proteins that binds to the 5S RNA in the ribosome where it forms part of the central protuberance. The chain is Large ribosomal subunit protein bL25 from Kocuria rhizophila (strain ATCC 9341 / DSM 348 / NBRC 103217 / DC2201).